A 565-amino-acid polypeptide reads, in one-letter code: Thiol:disulfide interchange protein DsbD (565 aa).

Positions 1 to 19 are cleaved as a signal peptide; sequence MAQRIFTLILLLCSTSVFA. 2 cysteine pairs are disulfide-bonded: Cys-122/Cys-128 and Cys-182/Cys-304. Helical transmembrane passes span 163 to 183, 208 to 228, 243 to 263, 296 to 316, 323 to 343, 365 to 385, and 386 to 406; these read LPFS…TPCV, LLTF…GLVV, YVLI…FGLF, IAGL…LLYI, WLGG…LMLI, FGFV…GDIW, and GLRL…ITSL. Residues 434-565 form the Thioredoxin domain; the sequence is WAFGATHTAQ…FSAHLRDRQP (132 aa). An intrachain disulfide couples Cys-480 to Cys-483.

The protein belongs to the thioredoxin family. DsbD subfamily.

The protein resides in the cell inner membrane. The enzyme catalyses [protein]-dithiol + NAD(+) = [protein]-disulfide + NADH + H(+). It carries out the reaction [protein]-dithiol + NADP(+) = [protein]-disulfide + NADPH + H(+). Functionally, required to facilitate the formation of correct disulfide bonds in some periplasmic proteins and for the assembly of the periplasmic c-type cytochromes. Acts by transferring electrons from cytoplasmic thioredoxin to the periplasm. This transfer involves a cascade of disulfide bond formation and reduction steps. The sequence is that of Thiol:disulfide interchange protein DsbD from Shigella dysenteriae serotype 1 (strain Sd197).